We begin with the raw amino-acid sequence, 271 residues long: Probable redox regulatory protein SCO3349 (271 aa).

2 disordered regions span residues 1-21 and 109-130; these read MPKT…KHIA and AEGT…TRPF. Positions 7–21 are enriched in basic and acidic residues; it reads AKDEKSAKKDKKHIA.

The protein belongs to the Rv0495c family.

Essential for maintaining intracellular redox homeostasis. The polypeptide is Probable redox regulatory protein SCO3349 (Streptomyces coelicolor (strain ATCC BAA-471 / A3(2) / M145)).